The chain runs to 2157 residues: DExH-box ATP-dependent RNA helicase DExH14 (2157 aa).

Residues 374–394 (KAASNTQSRMPTYGTQVTVQT) form a disordered region. The span at 375–394 (AASNTQSRMPTYGTQVTVQT) shows a compositional bias: polar residues. In terms of domain architecture, Helicase ATP-binding 1 spans 517-699 (QTVYHTNENI…FLRVNTDTGL (183 aa)). 530–537 (APTGAGKT) is an ATP binding site. A DEVH box motif is present at residues 641–644 (DEVH). Positions 734 to 932 (CYKKVVDSIK…SLKDNLNAEV (199 aa)) constitute a Helicase C-terminal 1 domain. The region spanning 1008 to 1315 (CTELGRVASH…LHAETYFTIS (308 aa)) is the SEC63 1 domain. The Helicase ATP-binding 2 domain maps to 1365 to 1540 (HVLYHTDNNV…WLGVGEIGLF (176 aa)). Residue 1378-1385 (APTGSGKT) participates in ATP binding. The short motif at 1482–1485 (DEIH) is the DEIH box element. The region spanning 1571–1780 (NKPAYAAICT…GTIGNKEDAV (210 aa)) is the Helicase C-terminal 2 domain. An SEC63 2 domain is found at 1839–2150 (PTMLGTIASQ…YLGFEQEHSI (312 aa)).

Belongs to the DExH box helicase family.

The protein resides in the nucleus. It catalyses the reaction ATP + H2O = ADP + phosphate + H(+). RNA helicase that plays an essential role in pre-mRNA splicing as component of the U5 snRNP and U4/U6-U5 tri-snRNP complexes. Involved in spliceosome assembly, activation and disassembly. The polypeptide is DExH-box ATP-dependent RNA helicase DExH14 (Arabidopsis thaliana (Mouse-ear cress)).